The primary structure comprises 241 residues: Small ribosomal subunit protein uS3 (241 aa).

The KH type-2 domain maps to 39–109 (VRNYVNKNLS…PIRINVVEVA (71 aa)). The segment at 213-241 (ADEQPTNREPQQRRRQQQRRRQQFEDRSE) is disordered.

It belongs to the universal ribosomal protein uS3 family. As to quaternary structure, part of the 30S ribosomal subunit. Forms a tight complex with proteins S10 and S14.

In terms of biological role, binds the lower part of the 30S subunit head. Binds mRNA in the 70S ribosome, positioning it for translation. The polypeptide is Small ribosomal subunit protein uS3 (Acaryochloris marina (strain MBIC 11017)).